The primary structure comprises 252 residues: Phosphonates import ATP-binding protein PhnC 1 (252 aa).

In terms of domain architecture, ABC transporter spans 2 to 244 (ISLNKLGVTY…QLEEIYQTLS (243 aa)). ATP is bound at residue 35–42 (GSSGAGKS).

This sequence belongs to the ABC transporter superfamily. Phosphonates importer (TC 3.A.1.9.1) family. The complex is composed of two ATP-binding proteins (PhnC), two transmembrane proteins (PhnE) and a solute-binding protein (PhnD).

Its subcellular location is the cell inner membrane. The enzyme catalyses phosphonate(out) + ATP + H2O = phosphonate(in) + ADP + phosphate + H(+). Part of the ABC transporter complex PhnCDE involved in phosphonates import. Responsible for energy coupling to the transport system. The chain is Phosphonates import ATP-binding protein PhnC 1 from Trichodesmium erythraeum (strain IMS101).